The chain runs to 122 residues: Large ribosomal subunit protein uL14 (122 aa).

This sequence belongs to the universal ribosomal protein uL14 family. In terms of assembly, part of the 50S ribosomal subunit. Forms a cluster with proteins L3 and L19. In the 70S ribosome, L14 and L19 interact and together make contacts with the 16S rRNA in bridges B5 and B8.

Functionally, binds to 23S rRNA. Forms part of two intersubunit bridges in the 70S ribosome. In Rickettsia rickettsii (strain Iowa), this protein is Large ribosomal subunit protein uL14.